A 641-amino-acid polypeptide reads, in one-letter code: Choline O-acetyltransferase (641 aa).

At Ser17 the chain carries Phosphoserine. The active-site Proton acceptor is the His335. Phosphoserine is present on Ser366. CoA-binding positions include 413–425 (GKTF…CSPD), Ser451, and Gln552. The segment at 615–641 (CSSRQPADSKPPTAKERARGPSQAKQS) is disordered.

It belongs to the carnitine/choline acetyltransferase family.

It carries out the reaction choline + acetyl-CoA = acetylcholine + CoA. In terms of biological role, catalyzes the reversible synthesis of acetylcholine (ACh) from acetyl CoA and choline at cholinergic synapses. This chain is Choline O-acetyltransferase (Chat), found in Mus musculus (Mouse).